Consider the following 344-residue polypeptide: MVTERQNEILNLIIDIFTKTHEPVGSKALQDSINSSSATIRNDMAALEKQGLLEKAHTSSGRKPSVAGFQYFVKHSLSFDRLAENELYEVIKAFDHEFFNLEDILQQAADLLTKLSGCTVVALDVEPSRQRLTAFDIVVLSQHTALAVFTLDESNTITSQFMIPRNFLKEDLDRLKGLVRERFLGQTVLDIHYKIRTEIPQIIQRYFTTTDNVIQLFEHIFGDIFKENVILSGKVQLLEFSDLTAYQFFDDPQKVAFEIRDSLAEDQMQSVRVADSRESCLADLTLISSKFLIPYRGFGVLAVVGPVNLDYQRLVSQMNVVNRVLTMKLTDFYRYLSSNHYEVH.

It belongs to the HrcA family.

Functionally, negative regulator of class I heat shock genes (grpE-dnaK-dnaJ and groELS operons). Prevents heat-shock induction of these operons. The polypeptide is Heat-inducible transcription repressor HrcA (Streptococcus sanguinis (strain SK36)).